Consider the following 482-residue polypeptide: MSAIRPAAVVVLAAGEGTRMKSATPKVLHDICGRSLVGHVLAAARELEPENLVVVVGHAREQVTAHLAEIDPAVRTAVQAEQNGTGHAVRMGLEELGGVVDGTVVVVCGDTPLLSGETLRQLAATHTADGNAVTVLTAEVPDATGYGRIVRDGASGAVTAIVEHKDASESQRAVREINSGVFAFDGRLLADALGKVRTDNSQGEEYLTDVLGILREAGHRVGASVAADHREIAGINNRVQLAEARRILNDRLLTRAMLAGVTVVDPATTWIDVTVTFGQDAIVHPGTQLQGTTQLGEGAEVGPNSRLKDTRVGAGARIDNTVAERADVGAQASVGPFAYLRPGTRLGAKAKVGTYVETKNASIGEGTKVPHLSYVGDATIGEYSNIGAASVFVNYDGQDKHHTTVGSHCRTGSDNMFVAPVTVGDGAYTAAGSVITKDVPPGSLAVARGQQRNIEGWVARKRPGSAAAKAAEVASRKPEGED.

The pyrophosphorylase stretch occupies residues 1–238 (MSAIRPAAVV…HREIAGINNR (238 aa)). UDP-N-acetyl-alpha-D-glucosamine contacts are provided by residues 12-15 (LAAG), Lys-26, Gln-79, and 84-85 (GT). Asp-110 contributes to the Mg(2+) binding site. Residues Gly-147, Glu-163, Asn-178, and Asn-236 each coordinate UDP-N-acetyl-alpha-D-glucosamine. Asn-236 contacts Mg(2+). The interval 239 to 259 (VQLAEARRILNDRLLTRAMLA) is linker. The tract at residues 260-482 (GVTVVDPATT…VASRKPEGED (223 aa)) is N-acetyltransferase. UDP-N-acetyl-alpha-D-glucosamine is bound by residues Arg-341 and Lys-359. His-371 functions as the Proton acceptor in the catalytic mechanism. The UDP-N-acetyl-alpha-D-glucosamine site is built by Tyr-374 and Asn-385. Acetyl-CoA-binding positions include Ala-388, 394 to 395 (NY), Ser-413, Ala-431, and Arg-448.

It in the N-terminal section; belongs to the N-acetylglucosamine-1-phosphate uridyltransferase family. The protein in the C-terminal section; belongs to the transferase hexapeptide repeat family. In terms of assembly, homotrimer. Requires Mg(2+) as cofactor.

The protein resides in the cytoplasm. The enzyme catalyses alpha-D-glucosamine 1-phosphate + acetyl-CoA = N-acetyl-alpha-D-glucosamine 1-phosphate + CoA + H(+). It carries out the reaction N-acetyl-alpha-D-glucosamine 1-phosphate + UTP + H(+) = UDP-N-acetyl-alpha-D-glucosamine + diphosphate. It functions in the pathway nucleotide-sugar biosynthesis; UDP-N-acetyl-alpha-D-glucosamine biosynthesis; N-acetyl-alpha-D-glucosamine 1-phosphate from alpha-D-glucosamine 6-phosphate (route II): step 2/2. Its pathway is nucleotide-sugar biosynthesis; UDP-N-acetyl-alpha-D-glucosamine biosynthesis; UDP-N-acetyl-alpha-D-glucosamine from N-acetyl-alpha-D-glucosamine 1-phosphate: step 1/1. The protein operates within bacterial outer membrane biogenesis; LPS lipid A biosynthesis. Catalyzes the last two sequential reactions in the de novo biosynthetic pathway for UDP-N-acetylglucosamine (UDP-GlcNAc). The C-terminal domain catalyzes the transfer of acetyl group from acetyl coenzyme A to glucosamine-1-phosphate (GlcN-1-P) to produce N-acetylglucosamine-1-phosphate (GlcNAc-1-P), which is converted into UDP-GlcNAc by the transfer of uridine 5-monophosphate (from uridine 5-triphosphate), a reaction catalyzed by the N-terminal domain. This Streptomyces avermitilis (strain ATCC 31267 / DSM 46492 / JCM 5070 / NBRC 14893 / NCIMB 12804 / NRRL 8165 / MA-4680) protein is Bifunctional protein GlmU.